Here is a 59-residue protein sequence, read N- to C-terminus: Venom protein 37.1 (59 aa).

Positions 1–18 (MVSTLMIASVKLRLYCTA) are cleaved as a signal peptide.

This sequence belongs to the non-disulfide-bridged peptide (NDBP) superfamily. Long chain multifunctional peptide (group 2) family. In terms of tissue distribution, expressed by the venom gland.

It is found in the secreted. The polypeptide is Venom protein 37.1 (Lychas mucronatus (Chinese swimming scorpion)).